Here is a 329-residue protein sequence, read N- to C-terminus: Ribosomal RNA small subunit methyltransferase C (329 aa).

It belongs to the methyltransferase superfamily. RsmC family. Monomer.

The protein resides in the cytoplasm. The catalysed reaction is guanosine(1207) in 16S rRNA + S-adenosyl-L-methionine = N(2)-methylguanosine(1207) in 16S rRNA + S-adenosyl-L-homocysteine + H(+). In terms of biological role, specifically methylates the guanine in position 1207 of 16S rRNA in the 30S particle. The chain is Ribosomal RNA small subunit methyltransferase C from Actinobacillus pleuropneumoniae serotype 7 (strain AP76).